The primary structure comprises 230 residues: Large ribosomal subunit protein uL1 (230 aa).

Belongs to the universal ribosomal protein uL1 family. As to quaternary structure, part of the 50S ribosomal subunit.

In terms of biological role, binds directly to 23S rRNA. The L1 stalk is quite mobile in the ribosome, and is involved in E site tRNA release. Functionally, protein L1 is also a translational repressor protein, it controls the translation of the L11 operon by binding to its mRNA. The protein is Large ribosomal subunit protein uL1 of Staphylococcus aureus (strain N315).